We begin with the raw amino-acid sequence, 164 residues long: S-ribosylhomocysteine lyase (164 aa).

Residues His54, His58, and Cys128 each coordinate Fe cation.

The protein belongs to the LuxS family. In terms of assembly, homodimer. The cofactor is Fe cation.

The enzyme catalyses S-(5-deoxy-D-ribos-5-yl)-L-homocysteine = (S)-4,5-dihydroxypentane-2,3-dione + L-homocysteine. In terms of biological role, involved in the synthesis of autoinducer 2 (AI-2) which is secreted by bacteria and is used to communicate both the cell density and the metabolic potential of the environment. The regulation of gene expression in response to changes in cell density is called quorum sensing. Catalyzes the transformation of S-ribosylhomocysteine (RHC) to homocysteine (HC) and 4,5-dihydroxy-2,3-pentadione (DPD). This chain is S-ribosylhomocysteine lyase, found in Campylobacter jejuni subsp. doylei (strain ATCC BAA-1458 / RM4099 / 269.97).